The chain runs to 666 residues: Endogenous retrovirus group K member 19 Gag polyprotein (666 aa).

Gly-2 carries the N-myristoyl glycine lipid modification. 2 disordered regions span residues 170–189 (LVGP…AGQV) and 223–264 (PLES…GSEL). Over residues 232–247 (GMPPAPQGRAPYPQPP) the composition is skewed to pro residues. 2 CCHC-type zinc fingers span residues 544-561 (GKCY…NCPV) and 580-597 (DLCP…QCRS). Residues 598-640 (KFDKNGQPLSGNEQRGQPQAPQQTGAFPIQPFVPHGFQGQQPP) are disordered. Polar residues predominate over residues 604-622 (QPLSGNEQRGQPQAPQQTG).

This sequence belongs to the beta type-B retroviral Gag protein family. HERV class-II K(HML-2) gag subfamily. In terms of processing, myristoylation is essential for retroviral assembly. Alteration of the glycine residue leads to a block in the budding of particles and an accumulation of Gag inside the cell. Post-translationally, specific enzymatic cleavages may yield mature proteins.

It localises to the cell membrane. Its function is as follows. The products of the Gag polyproteins of infectious retroviruses perform highly complex orchestrated tasks during the assembly, budding, maturation, and infection stages of the viral replication cycle. During viral assembly, the proteins form membrane associations and self-associations that ultimately result in budding of an immature virion from the infected cell. Gag precursors also function during viral assembly to selectively bind and package two plus strands of genomic RNA. Endogenous Gag proteins may have kept, lost or modified their original function during evolution. In Homo sapiens (Human), this protein is Endogenous retrovirus group K member 19 Gag polyprotein (ERVK-19).